The following is a 324-amino-acid chain: tRNA N6-adenosine threonylcarbamoyltransferase (324 aa).

Positions 107, 111, and 127 each coordinate Fe cation. Residues 127–131 (YVSGG), aspartate 159, glycine 172, glutamate 176, and asparagine 257 each bind substrate. Residue aspartate 285 coordinates Fe cation.

Belongs to the KAE1 / TsaD family. As to quaternary structure, monomer. Component of the KEOPS complex that consists of Kae1, Bud32, Cgi121 and Pcc1; the whole complex dimerizes. Requires Fe(2+) as cofactor.

It localises to the cytoplasm. The catalysed reaction is L-threonylcarbamoyladenylate + adenosine(37) in tRNA = N(6)-L-threonylcarbamoyladenosine(37) in tRNA + AMP + H(+). Functionally, required for the formation of a threonylcarbamoyl group on adenosine at position 37 (t(6)A37) in tRNAs that read codons beginning with adenine. Is a component of the KEOPS complex that is probably involved in the transfer of the threonylcarbamoyl moiety of threonylcarbamoyl-AMP (TC-AMP) to the N6 group of A37. Kae1 likely plays a direct catalytic role in this reaction, but requires other protein(s) of the complex to fulfill this activity. In vitro, binds tRNA, ssRNA, both single- and double-stranded DNA, and exhibits a low ATPase activity. This Pyrococcus abyssi (strain GE5 / Orsay) protein is tRNA N6-adenosine threonylcarbamoyltransferase.